The sequence spans 96 residues: uncharacterized protein (96 aa).

A helical membrane pass occupies residues methionine 1 to isoleucine 21.

Its subcellular location is the membrane. This is an uncharacterized protein from Saccharomyces cerevisiae (strain ATCC 204508 / S288c) (Baker's yeast).